A 1509-amino-acid chain; its full sequence is ABC transporter G family member 38 (1509 aa).

The 272-residue stretch at 196–467 (LGLVGLNFAK…FERCGFRCPE (272 aa)) folds into the ABC transporter 1 domain. 229 to 236 (GPPSSGKT) contributes to the ATP binding site. The region spanning 545–758 (ELLKTSCSKE…AYIAFSSNEM (214 aa)) is the ABC transmembrane type-2 1 domain. 7 consecutive transmembrane segments (helical) span residues 563-583 (FVYI…STVF), 598-618 (IYIG…FADL), 651-671 (IPSS…TMGF), 682-702 (LLVV…TAGL), 707-727 (VVTN…GGFI), 733-753 (IPKW…YIAF), and 791-811 (YWIA…LFSL). Residues 908–1160 (MSFNEINYYV…KVVEYFEAIP (253 aa)) enclose the ABC transporter 2 domain. Residue 953 to 960 (GVSGAGKT) participates in ATP binding. The ABC transmembrane type-2 2 domain occupies 1233-1447 (NQFKLCLWKQ…TVYGLIVSQY (215 aa)). Helical transmembrane passes span 1252 to 1272 (YNLV…TIFW), 1284 to 1304 (LLVI…ENSV), 1336 to 1356 (VVVE…IVYP), 1367 to 1387 (FFWF…YGMM), 1397 to 1417 (VASI…GFFI), 1425 to 1445 (WWVW…LIVS), and 1478 to 1498 (FMGV…FTYA).

It belongs to the ABC transporter superfamily. ABCG family. PDR (TC 3.A.1.205) subfamily.

It localises to the membrane. In terms of biological role, may be a general defense protein. The polypeptide is ABC transporter G family member 38 (Oryza sativa subsp. japonica (Rice)).